The sequence spans 428 residues: Chaperone SurA (428 aa).

The signal sequence occupies residues 1–20 (MKNWKTLLLGIAMIANTSFA). 2 PpiC domains span residues 171 to 272 (STEL…KVND) and 282 to 382 (VTEV…ELLD).

The protein localises to the periplasm. The catalysed reaction is [protein]-peptidylproline (omega=180) = [protein]-peptidylproline (omega=0). Functionally, chaperone involved in the correct folding and assembly of outer membrane proteins. Recognizes specific patterns of aromatic residues and the orientation of their side chains, which are found more frequently in integral outer membrane proteins. May act in both early periplasmic and late outer membrane-associated steps of protein maturation. This is Chaperone SurA from Salmonella choleraesuis (strain SC-B67).